The following is a 151-amino-acid chain: Small ribosomal subunit protein uS15 (151 aa).

It belongs to the universal ribosomal protein uS15 family.

The chain is Small ribosomal subunit protein uS15 (RPS13) from Lumbricus rubellus (Humus earthworm).